The primary structure comprises 819 residues: Leucine--tRNA ligase (819 aa).

Residues 40-51 (PYPSGAGLHVGH) carry the 'HIGH' region motif. The 'KMSKS' region motif lies at 600-604 (KMSKS). Residue Lys603 coordinates ATP.

This sequence belongs to the class-I aminoacyl-tRNA synthetase family.

The protein resides in the cytoplasm. It catalyses the reaction tRNA(Leu) + L-leucine + ATP = L-leucyl-tRNA(Leu) + AMP + diphosphate. This is Leucine--tRNA ligase from Chlamydia trachomatis serovar A (strain ATCC VR-571B / DSM 19440 / HAR-13).